The following is a 570-amino-acid chain: Proline--tRNA ligase (570 aa).

The protein belongs to the class-II aminoacyl-tRNA synthetase family. ProS type 1 subfamily. As to quaternary structure, homodimer.

It is found in the cytoplasm. The enzyme catalyses tRNA(Pro) + L-proline + ATP = L-prolyl-tRNA(Pro) + AMP + diphosphate. In terms of biological role, catalyzes the attachment of proline to tRNA(Pro) in a two-step reaction: proline is first activated by ATP to form Pro-AMP and then transferred to the acceptor end of tRNA(Pro). As ProRS can inadvertently accommodate and process non-cognate amino acids such as alanine and cysteine, to avoid such errors it has two additional distinct editing activities against alanine. One activity is designated as 'pretransfer' editing and involves the tRNA(Pro)-independent hydrolysis of activated Ala-AMP. The other activity is designated 'posttransfer' editing and involves deacylation of mischarged Ala-tRNA(Pro). The misacylated Cys-tRNA(Pro) is not edited by ProRS. This Neisseria meningitidis serogroup B (strain ATCC BAA-335 / MC58) protein is Proline--tRNA ligase.